We begin with the raw amino-acid sequence, 125 residues long: Large ribosomal subunit protein bL12 (125 aa).

It belongs to the bacterial ribosomal protein bL12 family. Homodimer. Part of the ribosomal stalk of the 50S ribosomal subunit. Forms a multimeric L10(L12)X complex, where L10 forms an elongated spine to which 2 to 4 L12 dimers bind in a sequential fashion. Binds GTP-bound translation factors.

Its function is as follows. Forms part of the ribosomal stalk which helps the ribosome interact with GTP-bound translation factors. Is thus essential for accurate translation. In Chlorobium phaeobacteroides (strain DSM 266 / SMG 266 / 2430), this protein is Large ribosomal subunit protein bL12.